We begin with the raw amino-acid sequence, 887 residues long: Phosphatidylinositol 3-kinase catalytic subunit type 3 (887 aa).

Residues 35-184 (YKAVLEDPML…LAKLTKAHRQ (150 aa)) enclose the C2 PI3K-type domain. Positions 150–170 (EADGSEPTKTPGRTSSTLSED) are disordered. A compositionally biased stretch (polar residues) spans 156 to 170 (PTKTPGRTSSTLSED). Threonine 163 is subject to Phosphothreonine; by AMPK. Residue serine 165 is modified to Phosphoserine; by AMPK. Phosphoserine is present on residues serine 244, serine 261, and serine 282. One can recognise a PIK helical domain in the interval 282–520 (SDHGLKPNAA…PKTHEMYLNV (239 aa)). Disordered regions lie at residues 416 to 435 (EPTK…NSGI) and 446 to 468 (ITSP…SSDG). Residues 423-435 (QGSVSESVSNSGI) are compositionally biased toward low complexity. The span at 449–459 (PLPPVSSPPPA) shows a compositional bias: pro residues. One can recognise a PI3K/PI4K catalytic domain in the interval 605–871 (IPETATLFKS…LIDESVHALF (267 aa)). The tract at residues 611 to 617 (LFKSALM) is G-loop. A catalytic loop region spans residues 740–748 (GVGDRHLDN). Positions 759-780 (HIDFGYILGRDPKPLPPPMKLN) are activation loop.

The protein belongs to the PI3/PI4-kinase family. Component of the PI3K (PI3KC3/PI3K-III/class III phosphatidylinositol 3-kinase) complex the core of which is composed of the catalytic subunit PIK3C3, the regulatory subunit PIK3R4 and BECN1 associating with additional regulatory/auxiliary subunits to form alternative complex forms. Alternative complex forms containing a fourth regulatory subunit in a mutually exclusive manner are: the PI3K complex I (PI3KC3-C1) containing ATG14, and the PI3K complex II (PI3KC3-C2) containing UVRAG. PI3KC3-C1 displays a V-shaped architecture with PIK3R4 serving as a bridge between PIK3C3 and the ATG14:BECN1 subcomplex. Both, PI3KC3-C1 and PI3KC3-C2, can associate with further regulatory subunits such as RUBCN, SH3GLB1/Bif-1 and AMBRA1. PI3KC3-C1 probably associates with PIK3CB. Interacts with RAB7A in the presence of PIK3R4. Interacts with AMBRA1. Interacts with BECN1P1/BECN2. Interacts with SLAMF1. May be a component of a complex composed of RAB5A (in GDP-bound form), DYN2 and PIK3C3. Interacts with NCKAP1L. Interacts with ATG14; this interaction is increased in the absence of TMEM39A. Interacts with STEEP1; the interaction is STING1-dependent and required for trafficking of STING1 from the endoplasmic reticulum. Interacts with YWHAG. Interacts with ARMC3. Mn(2+) serves as cofactor. In terms of processing, ubiquitinated via 'Lys-29'- and 'Lys-48'-linked ubiquitination by UBE3C, promoting its degradation. Deubiquitination by ZRANB1/TRABID promotes its stabilization, leading to autophagosome maturation.

The protein localises to the midbody. It localises to the late endosome. Its subcellular location is the cytoplasmic vesicle. It is found in the autophagosome. It catalyses the reaction a 1,2-diacyl-sn-glycero-3-phospho-(1D-myo-inositol) + ATP = a 1,2-diacyl-sn-glycero-3-phospho-(1D-myo-inositol-3-phosphate) + ADP + H(+). Catalytic subunit of the PI3K complex that mediates formation of phosphatidylinositol 3-phosphate; different complex forms are believed to play a role in multiple membrane trafficking pathways: PI3KC3-C1 is involved in initiation of autophagosomes and PI3KC3-C2 in maturation of autophagosomes and endocytosis. As part of PI3KC3-C1, promotes endoplasmic reticulum membrane curvature formation prior to vesicle budding. Involved in regulation of degradative endocytic trafficking and required for the abscission step in cytokinesis, probably in the context of PI3KC3-C2. Involved in the transport of lysosomal enzyme precursors to lysosomes. Required for transport from early to late endosomes. This is Phosphatidylinositol 3-kinase catalytic subunit type 3 from Sus scrofa (Pig).